We begin with the raw amino-acid sequence, 188 residues long: Holliday junction branch migration complex subunit RuvA (188 aa).

The interval 1 to 63 (MIEIIEGIYK…QEDMTIYGFD (63 aa)) is domain I. A domain II region spans residues 64–142 (SKVKKETFEK…VVEVNEEMLE (79 aa)). A region of interest (flexible linker) is located at residue Glu-142. The interval 142–188 (EAIEALVSLGYSKTQARNAVSKVLKESPNISNVSKIIKEALKILAKI) is domain III.

This sequence belongs to the RuvA family. In terms of assembly, homotetramer. Forms an RuvA(8)-RuvB(12)-Holliday junction (HJ) complex. HJ DNA is sandwiched between 2 RuvA tetramers; dsDNA enters through RuvA and exits via RuvB. An RuvB hexamer assembles on each DNA strand where it exits the tetramer. Each RuvB hexamer is contacted by two RuvA subunits (via domain III) on 2 adjacent RuvB subunits; this complex drives branch migration. In the full resolvosome a probable DNA-RuvA(4)-RuvB(12)-RuvC(2) complex forms which resolves the HJ.

The protein localises to the cytoplasm. Its function is as follows. The RuvA-RuvB-RuvC complex processes Holliday junction (HJ) DNA during genetic recombination and DNA repair, while the RuvA-RuvB complex plays an important role in the rescue of blocked DNA replication forks via replication fork reversal (RFR). RuvA specifically binds to HJ cruciform DNA, conferring on it an open structure. The RuvB hexamer acts as an ATP-dependent pump, pulling dsDNA into and through the RuvAB complex. HJ branch migration allows RuvC to scan DNA until it finds its consensus sequence, where it cleaves and resolves the cruciform DNA. The protein is Holliday junction branch migration complex subunit RuvA of Fervidobacterium nodosum (strain ATCC 35602 / DSM 5306 / Rt17-B1).